Here is a 349-residue protein sequence, read N- to C-terminus: Sphingolipid C4-hydroxylase SUR2 (349 aa).

5 helical membrane-spanning segments follow: residues 9–29, 50–70, 99–119, 148–168, and 209–229; these read AAGSFPLAFGLKTSFGFMHYA, VLALVAPVVAYWALSGIFHVI, FLEVILQHIIQTIVGLIFMHF, IYYGYMYGMSALKIFAGFLFV, and PVEGFLLDTLGTGIAMTLTHL. The region spanning 162–297 is the Fatty acid hydroxylase domain; sequence FAGFLFVDTW…FTFWDNLFQT (136 aa).

It belongs to the sterol desaturase family.

It is found in the endoplasmic reticulum membrane. The catalysed reaction is sphinganine + 2 Fe(II)-[cytochrome b5] + O2 + 2 H(+) = (4R)-hydroxysphinganine + 2 Fe(III)-[cytochrome b5] + H2O. It catalyses the reaction an N-acylsphinganine + 2 Fe(II)-[cytochrome b5] + O2 + 2 H(+) = an N-acyl-(4R)-4-hydroxysphinganine + 2 Fe(III)-[cytochrome b5] + H2O. It carries out the reaction an N-acyleicosasphinganine + 2 Fe(II)-[cytochrome b5] + O2 + 2 H(+) = N-acyl-4-hydroxyeicosasphinganine + 2 Fe(III)-[cytochrome b5] + H2O. The protein operates within membrane lipid metabolism; sphingolipid biosynthesis. Required for hydroxylation of C-4 in the sphingoid moiety of ceramide. Catalyzes the conversion of sphinganine to phytosphingosine in sphingolipid biosynthesis. Involved in the response to syringomycin. The chain is Sphingolipid C4-hydroxylase SUR2 (SUR2) from Saccharomyces cerevisiae (strain ATCC 204508 / S288c) (Baker's yeast).